A 360-amino-acid polypeptide reads, in one-letter code: Phospho-N-acetylmuramoyl-pentapeptide-transferase (360 aa).

10 helical membrane-spanning segments follow: residues 26–46 (AILG…ILIK), 73–93 (TMGG…WGDL), 97–117 (YVLV…IDDY), 135–155 (ALQS…STMV), 168–188 (IMPQ…VGAS), 199–219 (GLAI…AYLS), 236–256 (AGEL…FLWF), 263–283 (VFMG…IAIL), 288–308 (ILLV…ILQV), and 338–358 (VIVR…ATLK).

Belongs to the glycosyltransferase 4 family. MraY subfamily. It depends on Mg(2+) as a cofactor.

It is found in the cell inner membrane. It catalyses the reaction UDP-N-acetyl-alpha-D-muramoyl-L-alanyl-gamma-D-glutamyl-meso-2,6-diaminopimeloyl-D-alanyl-D-alanine + di-trans,octa-cis-undecaprenyl phosphate = di-trans,octa-cis-undecaprenyl diphospho-N-acetyl-alpha-D-muramoyl-L-alanyl-D-glutamyl-meso-2,6-diaminopimeloyl-D-alanyl-D-alanine + UMP. It functions in the pathway cell wall biogenesis; peptidoglycan biosynthesis. In terms of biological role, catalyzes the initial step of the lipid cycle reactions in the biosynthesis of the cell wall peptidoglycan: transfers peptidoglycan precursor phospho-MurNAc-pentapeptide from UDP-MurNAc-pentapeptide onto the lipid carrier undecaprenyl phosphate, yielding undecaprenyl-pyrophosphoryl-MurNAc-pentapeptide, known as lipid I. The sequence is that of Phospho-N-acetylmuramoyl-pentapeptide-transferase from Shewanella frigidimarina (strain NCIMB 400).